The primary structure comprises 863 residues: Leucine--tRNA ligase (863 aa).

The 'HIGH' region motif lies at 42–52 (PYPSGRLHMGH). The short motif at 618 to 622 (KMSKS) is the 'KMSKS' region element. An ATP-binding site is contributed by Lys621.

The protein belongs to the class-I aminoacyl-tRNA synthetase family.

Its subcellular location is the cytoplasm. The catalysed reaction is tRNA(Leu) + L-leucine + ATP = L-leucyl-tRNA(Leu) + AMP + diphosphate. This chain is Leucine--tRNA ligase, found in Colwellia psychrerythraea (strain 34H / ATCC BAA-681) (Vibrio psychroerythus).